A 718-amino-acid polypeptide reads, in one-letter code: Potassium channel KAT1 (718 aa).

Topologically, residues Met1–Glu60 are cytoplasmic. Residues Leu61–Leu81 form a helical membrane-spanning segment. Topologically, residues Arg82–Leu88 are extracellular. Residues Leu89–Val109 form a helical membrane-spanning segment. The Cytoplasmic segment spans residues Ala110–Ser132. Residues Thr133–Thr153 form a helical membrane-spanning segment. The Extracellular segment spans residues His154 to Lys162. The chain crosses the membrane as a helical; Voltage-sensor span at residues Val163–Glu183. The Cytoplasmic segment spans residues Lys184–Lys197. A helical membrane pass occupies residues Leu198–Asp218. At Arg219–Ile245 the chain is on the extracellular side. An intramembrane region (pore-forming) is located at residues Thr246 to Ala265. Topologically, residues Glu266–Thr269 are extracellular. A helical membrane pass occupies residues Glu270–Gly290. The Cytoplasmic portion of the chain corresponds to Asn291–Met718. A nucleoside 3',5'-cyclic phosphate is bound at residue Leu374–Lys493. Positions Glu560–Val584 are disordered. Positions Thr562 to Met574 are enriched in polar residues. Over residues Thr575–Val584 the composition is skewed to basic and acidic residues. The KHA domain occupies Arg647–Met718.

The protein belongs to the potassium channel family. Plant (TC 1.A.1.4) subfamily.

It is found in the membrane. In terms of biological role, probable inward-rectifying potassium channel. Assuming opened or closed conformations in response to the voltage difference across the membrane, the channel is activated by hyperpolarization. This is Potassium channel KAT1 from Oryza sativa subsp. japonica (Rice).